The following is an 81-amino-acid chain: Photosystem I iron-sulfur center (81 aa).

4Fe-4S ferredoxin-type domains follow at residues 2–31 (SHFV…MIPW) and 39–68 (IASA…VRVY). Positions 11, 14, 17, 21, 48, 51, 54, and 58 each coordinate [4Fe-4S] cluster.

The eukaryotic PSI reaction center is composed of at least 11 subunits. The cofactor is [4Fe-4S] cluster.

Its subcellular location is the plastid thylakoid membrane. It carries out the reaction reduced [plastocyanin] + hnu + oxidized [2Fe-2S]-[ferredoxin] = oxidized [plastocyanin] + reduced [2Fe-2S]-[ferredoxin]. Its function is as follows. Apoprotein for the two 4Fe-4S centers FA and FB of photosystem I (PSI); essential for photochemical activity. FB is the terminal electron acceptor of PSI, donating electrons to ferredoxin. The C-terminus interacts with PsaA/B/D and helps assemble the protein into the PSI complex. Required for binding of PsaD and PsaE to PSI. PSI is a plastocyanin-ferredoxin oxidoreductase, converting photonic excitation into a charge separation, which transfers an electron from the donor P700 chlorophyll pair to the spectroscopically characterized acceptors A0, A1, FX, FA and FB in turn. In Cuscuta exaltata (Tall dodder), this protein is Photosystem I iron-sulfur center.